Here is a 369-residue protein sequence, read N- to C-terminus: Phospho-N-acetylmuramoyl-pentapeptide-transferase (369 aa).

The next 10 membrane-spanning stretches (helical) occupy residues 2–22 (IALL…TPLF), 55–75 (TVVV…MFLM), 86–106 (ALIL…DDFI), 120–140 (AKLI…LNFP), 163–183 (LAFG…NLIV), 196–216 (LDGL…LMGI), 239–259 (PLDL…FLWW), 266–286 (IFMG…FAIL), 291–311 (LLLG…IIQV), and 348–368 (ILGG…WVVL).

Belongs to the glycosyltransferase 4 family. MraY subfamily. Mg(2+) is required as a cofactor.

The protein resides in the cell membrane. The catalysed reaction is UDP-N-acetyl-alpha-D-muramoyl-L-alanyl-gamma-D-glutamyl-meso-2,6-diaminopimeloyl-D-alanyl-D-alanine + di-trans,octa-cis-undecaprenyl phosphate = di-trans,octa-cis-undecaprenyl diphospho-N-acetyl-alpha-D-muramoyl-L-alanyl-D-glutamyl-meso-2,6-diaminopimeloyl-D-alanyl-D-alanine + UMP. Its pathway is cell wall biogenesis; peptidoglycan biosynthesis. In terms of biological role, catalyzes the initial step of the lipid cycle reactions in the biosynthesis of the cell wall peptidoglycan: transfers peptidoglycan precursor phospho-MurNAc-pentapeptide from UDP-MurNAc-pentapeptide onto the lipid carrier undecaprenyl phosphate, yielding undecaprenyl-pyrophosphoryl-MurNAc-pentapeptide, known as lipid I. The chain is Phospho-N-acetylmuramoyl-pentapeptide-transferase from Pseudarthrobacter chlorophenolicus (strain ATCC 700700 / DSM 12829 / CIP 107037 / JCM 12360 / KCTC 9906 / NCIMB 13794 / A6) (Arthrobacter chlorophenolicus).